The chain runs to 729 residues: Catalase-peroxidase (729 aa).

The tryptophyl-tyrosyl-methioninium (Trp-Tyr) (with M-243) cross-link spans 95-217 (WHSAGTYRIT…LAAVQMGLIY (123 aa)). Residue His-96 is the Proton acceptor of the active site. Positions 217 to 243 (YVNPEGPNGKPDPIAAATDIRETFFRM) form a cross-link, tryptophyl-tyrosyl-methioninium (Tyr-Met) (with W-95). Position 258 (His-258) interacts with heme b.

Belongs to the peroxidase family. Peroxidase/catalase subfamily. As to quaternary structure, homodimer or homotetramer. Heme b is required as a cofactor. Formation of the three residue Trp-Tyr-Met cross-link is important for the catalase, but not the peroxidase activity of the enzyme.

It carries out the reaction H2O2 + AH2 = A + 2 H2O. It catalyses the reaction 2 H2O2 = O2 + 2 H2O. Its function is as follows. Bifunctional enzyme with both catalase and broad-spectrum peroxidase activity. This chain is Catalase-peroxidase, found in Nitrobacter hamburgensis (strain DSM 10229 / NCIMB 13809 / X14).